We begin with the raw amino-acid sequence, 161 residues long: Lipoprotein signal peptidase (161 aa).

3 helical membrane passes run L4–Y24, K61–I81, and S87–D107. Active-site residues include D116 and D132. A helical membrane pass occupies residues I127 to I147.

Belongs to the peptidase A8 family.

Its subcellular location is the cell membrane. It catalyses the reaction Release of signal peptides from bacterial membrane prolipoproteins. Hydrolyzes -Xaa-Yaa-Zaa-|-(S,diacylglyceryl)Cys-, in which Xaa is hydrophobic (preferably Leu), and Yaa (Ala or Ser) and Zaa (Gly or Ala) have small, neutral side chains.. The protein operates within protein modification; lipoprotein biosynthesis (signal peptide cleavage). Its function is as follows. This protein specifically catalyzes the removal of signal peptides from prolipoproteins. The chain is Lipoprotein signal peptidase from Enterococcus faecalis (strain ATCC 700802 / V583).